A 145-amino-acid polypeptide reads, in one-letter code: 3-hydroxyacyl-[acyl-carrier-protein] dehydratase FabZ (145 aa).

His-49 is an active-site residue.

Belongs to the thioester dehydratase family. FabZ subfamily.

It localises to the cytoplasm. The enzyme catalyses a (3R)-hydroxyacyl-[ACP] = a (2E)-enoyl-[ACP] + H2O. Its function is as follows. Involved in unsaturated fatty acids biosynthesis. Catalyzes the dehydration of short chain beta-hydroxyacyl-ACPs and long chain saturated and unsaturated beta-hydroxyacyl-ACPs. The chain is 3-hydroxyacyl-[acyl-carrier-protein] dehydratase FabZ from Rickettsia massiliae (strain Mtu5).